We begin with the raw amino-acid sequence, 335 residues long: Anthranilate phosphoribosyltransferase (335 aa).

5-phospho-alpha-D-ribose 1-diphosphate is bound by residues glycine 79, 82 to 83 (GD), threonine 87, 89 to 92 (NIST), 107 to 115 (KHGNRSASS), and alanine 119. Residue glycine 79 participates in anthranilate binding. Residue serine 91 coordinates Mg(2+). Asparagine 110 provides a ligand contact to anthranilate. Anthranilate is bound at residue arginine 165. Mg(2+) contacts are provided by aspartate 224 and glutamate 225.

It belongs to the anthranilate phosphoribosyltransferase family. As to quaternary structure, homodimer. Mg(2+) is required as a cofactor.

It catalyses the reaction N-(5-phospho-beta-D-ribosyl)anthranilate + diphosphate = 5-phospho-alpha-D-ribose 1-diphosphate + anthranilate. Its pathway is amino-acid biosynthesis; L-tryptophan biosynthesis; L-tryptophan from chorismate: step 2/5. Catalyzes the transfer of the phosphoribosyl group of 5-phosphorylribose-1-pyrophosphate (PRPP) to anthranilate to yield N-(5'-phosphoribosyl)-anthranilate (PRA). This Methanobrevibacter smithii (strain ATCC 35061 / DSM 861 / OCM 144 / PS) protein is Anthranilate phosphoribosyltransferase.